The chain runs to 264 residues: Probable pectate lyase D (264 aa).

Positions 1-17 (MFFKQLAVLSFATSALA) are cleaved as a signal peptide. Asparagine 60 carries an N-linked (GlcNAc...) asparagine glycan. Residues 234-264 (YEGTDNNDEEPQEISTGPSNACQYTDPLPSC) form a disordered region. Residues 235–245 (EGTDNNDEEPQ) are compositionally biased toward acidic residues. The span at 246–256 (EISTGPSNACQ) shows a compositional bias: polar residues.

It belongs to the polysaccharide lyase 3 family. Ca(2+) is required as a cofactor.

Its subcellular location is the secreted. The catalysed reaction is Eliminative cleavage of (1-&gt;4)-alpha-D-galacturonan to give oligosaccharides with 4-deoxy-alpha-D-galact-4-enuronosyl groups at their non-reducing ends.. Pectinolytic enzyme consist of four classes of enzymes: pectin lyase, polygalacturonase, pectin methylesterase and rhamnogalacturonase. Among pectinolytic enzymes, pectin lyase is the most important in depolymerization of pectin, since it cleaves internal glycosidic bonds of highly methylated pectins. Favors pectate, the anion, over pectin, the methyl ester. The chain is Probable pectate lyase D (plyD) from Emericella nidulans (strain FGSC A4 / ATCC 38163 / CBS 112.46 / NRRL 194 / M139) (Aspergillus nidulans).